Consider the following 604-residue polypeptide: Microtubule-associated protein 70-4 (604 aa).

The disordered stretch occupies residues 1 to 33; that stretch reads MEERGFMSPSLAISASYREGGSKGMSRRRSMRP. Positions 49–351 form a coiled coil; it reads DPVRIELNRL…ADRAAKSEAQ (303 aa). The segment at 233-470 is required for targeting to microtubules; that stretch reads IIDKMHRQKV…PLNHKSSEGT (238 aa). 2 disordered regions span residues 367-422 and 434-495; these read LKGP…RSLT and GTSR…NDSV. Residues 371 to 385 show a composition bias toward low complexity; that stretch reads TSSSSRGTSVGRSSS. Composition is skewed to polar residues over residues 401-422 and 468-478; these read PKIT…RSLT and EGTSRGESPSS. A coiled-coil region spans residues 521–569; the sequence is LRDKDEAIEMLAKKVETLTKAMDVEAKKMRREVAVMGKEVAAMRVVDKG.

This sequence belongs to the MAP70 family.

It localises to the cytoplasm. Its subcellular location is the cytoskeleton. Plant-specific protein that interact with microtubules. In Arabidopsis thaliana (Mouse-ear cress), this protein is Microtubule-associated protein 70-4 (MAP70.4).